A 675-amino-acid chain; its full sequence is E3 ubiquitin-protein ligase COP1 (675 aa).

Positions 1–40 (MEEISTDPVVPAVKPDPRTSSVGEGANRHENDDGGSGGSE) are disordered. Positions 52, 55, 67, 69, 72, 75, 86, and 89 each coordinate Zn(2+). Residues 52-90 (CPICMQIIKDAFLTACGHSFCYMCIITHLRNKSDCPCCS) form an RING-type zinc finger. Residues 67–177 (CGHSFCYMCI…LDFLHCLRKQ (111 aa)) form a CLS (cytoplasmic localization signal) region. Residues 120-177 (ASPLDQFREALQRGCDVSIKEVDNLLTLLAERKRKMEQEEAERNMQILLDFLHCLRKQ) are SNLS (subnuclear localization signal). Residues 134-201 (CDVSIKEVDN…IKEDINAVER (68 aa)) are a coiled coil. A disordered region spans residues 261 to 290 (EGKAQGSSHGLPKKDALSGSDSQSLNQSTV). The segment covering 279–290 (GSDSQSLNQSTV) has biased composition (polar residues). A Bipartite nuclear localization signal motif is present at residues 294-317 (RKKRIHAQFNDLQECYLQKRRQLA). WD repeat units follow at residues 369–408 (HSANIVSSIEFDRDDELFATAGVSRCIKVFDFSSVVNEPA), 418–458 (STRS…SLME), 461–501 (EHEK…SVIN), 503–543 (DMKA…QPLH), 547–585 (GHKKAVSYVKFLSNNELASASTDSTLRLWDVKDNLPVRT), 588–627 (GHTNEKNFVGLTVNSEYLACGSETNEVYVYHKEITRPVTS), and 642–675 (AGSYFISAVCWKSDSPTMLTANSQGTIKVLVLAA). The binding of human TRIB1 COP1-binding-motif stretch occupies residues 593-595 (KNF).

In terms of assembly, homodimer. Interacts with HY5, HYH, BBX24/STO, BBX25/STH, CIP8, COP10, SPA1, SPA2, SPA3, SPA4 and UVR8 and phosphorylated PHYA. Light induces dissociation of the SPA1/COP1 complex. Interacts with HRT/RPP8 and triggers it to the 26s proteasome. Binds to CRY2; this competitive interaction prevents triggering to proteasome of other binding proteins. Binds to SHW1 in the nucleus. Bonds to CIP7. Interacts with CSU2. Binds to CIP1. Interacts directly with DHU1. Associates to UNE10/PIF8. Binds directly to PCH1 and PCHL. In terms of processing, autoubiquitinated.

It localises to the nucleus. The protein localises to the cytoplasm. The enzyme catalyses S-ubiquitinyl-[E2 ubiquitin-conjugating enzyme]-L-cysteine + [acceptor protein]-L-lysine = [E2 ubiquitin-conjugating enzyme]-L-cysteine + N(6)-ubiquitinyl-[acceptor protein]-L-lysine.. Its pathway is protein modification; protein ubiquitination. E3 ubiquitin-protein ligase that acts as a repressor of photomorphogenesis and as an activator of etiolation in darkness. E3 ubiquitin ligases accept ubiquitin from an E2 ubiquitin-conjugating enzyme in the form of a thioester and then directly transfers the ubiquitin to targeted substrates. Represses photomorphogenesis in darkness by mediating ubiquitination and subsequent proteasomal degradation of light-induced transcription factors such as HY5, HYH and LAF1. Down-regulates MYB21, probably via ubiquitination process. Light stimuli abrogate the repression of photomorphogenesis, possibly due to its localization to the cytoplasm. Could play a role in switching between skotomorphogenetic and photomorphogenetic pathways. Mediates the ubiquitination-dependent degradation of HY5 in the darkness during seedling development (e.g. hypocotyl growth). Represses CIP7 in darkness. Triggers ubiquitination and subsequent protein degradation of UNE10/PIF8, PCH1 and PCHL in the dark. The sequence is that of E3 ubiquitin-protein ligase COP1 from Arabidopsis thaliana (Mouse-ear cress).